A 20-amino-acid polypeptide reads, in one-letter code: Thylakoid lumenal 14.7 kDa protein (20 aa).

The tract at residues 1–20 (KTGVNKPELLPKEETTVIDV) is disordered. Residues 9 to 20 (LLPKEETTVIDV) are compositionally biased toward basic and acidic residues.

It is found in the plastid. It localises to the chloroplast thylakoid lumen. The sequence is that of Thylakoid lumenal 14.7 kDa protein from Spinacia oleracea (Spinach).